Reading from the N-terminus, the 46-residue chain is AFKDLKALGCKKAMNKFNKHTLLEYLLEEGNLSRPAVQLLGDVMSE.

An N-linked (GlcNAc...) asparagine glycan is attached at asparagine 31.

The protein belongs to the flavin monoamine oxidase family. FIG1 subfamily. The cofactor is FAD.

It localises to the secreted. The protein resides in the lysosome. Its subcellular location is the cytoplasmic vesicle. The protein localises to the secretory vesicle. It is found in the acrosome. It catalyses the reaction an L-alpha-amino acid + O2 + H2O = a 2-oxocarboxylate + H2O2 + NH4(+). It carries out the reaction L-tryptophan + O2 + H2O = indole-3-pyruvate + H2O2 + NH4(+). The catalysed reaction is L-phenylalanine + O2 + H2O = 3-phenylpyruvate + H2O2 + NH4(+). The enzyme catalyses L-tyrosine + O2 + H2O = 3-(4-hydroxyphenyl)pyruvate + H2O2 + NH4(+). It catalyses the reaction L-arginine + O2 + H2O = 5-guanidino-2-oxopentanoate + H2O2 + NH4(+). Its pathway is amino-acid degradation; L-tryptophan degradation via pyruvate pathway. Secreted L-amino-acid oxidase that acts as a key immunoregulator. Has preference for L-aromatic amino acids: converts phenylalanine (Phe), tyrosine (Tyr) and tryptophan (Trp) to phenylpyruvic acid (PP), hydroxyphenylpyruvic acid (HPP), and indole-3-pyruvic acid (I3P), respectively. Also has weak L-arginine oxidase activity. Acts as a negative regulator of anti-tumor immunity by mediating Trp degradation via an indole pyruvate pathway that activates the transcription factor AHR. IL4I1-mediated Trp catabolism generates I3P, giving rise to indole metabolites (indole-3-acetic acid (IAA) and indole-3-aldehyde (I3A)) and kynurenic acid, which act as ligands for AHR, a ligand-activated transcription factor that plays important roles in immunity and cancer. AHR activation by indoles following IL4I1-mediated Trp degradation enhances tumor progression by promoting cancer cell motility and suppressing adaptive immunity. Also has an immunoregulatory function in some immune cells, probably by mediating Trp degradation and promoting downstream AHR activation: inhibits T-cell activation and proliferation, promotes the differentiation of naive CD4(+) T-cells into FOXP3(+) regulatory T-cells (Treg) and regulates the development and function of B-cells. Also regulates M2 macrophage polarization by inhibiting T-cell activation. Also has antibacterial properties by inhibiting growth of Gram negative and Gram positive bacteria through the production of NH4(+) and H2O2. The chain is L-amino-acid oxidase from Mus spretus (Western Mediterranean mouse).